The following is a 455-amino-acid chain: UDP-N-acetylmuramoylalanine--D-glutamate ligase (455 aa).

Residue 119 to 125 participates in ATP binding; it reads GTNGKTT.

It belongs to the MurCDEF family.

It is found in the cytoplasm. The catalysed reaction is UDP-N-acetyl-alpha-D-muramoyl-L-alanine + D-glutamate + ATP = UDP-N-acetyl-alpha-D-muramoyl-L-alanyl-D-glutamate + ADP + phosphate + H(+). The protein operates within cell wall biogenesis; peptidoglycan biosynthesis. Cell wall formation. Catalyzes the addition of glutamate to the nucleotide precursor UDP-N-acetylmuramoyl-L-alanine (UMA). The chain is UDP-N-acetylmuramoylalanine--D-glutamate ligase from Listeria monocytogenes serotype 4b (strain F2365).